The sequence spans 454 residues: Apyrase (454 aa).

At 1 to 7 (MLNQNSH) the chain is on the cytoplasmic side. The helical; Signal-anchor for type II membrane protein transmembrane segment at 8–28 (FIFIILAIFLVLPLSLLSKNV) threads the bilayer. Over 29–454 (NAQIPLRRHL…TTNKIRVASS (426 aa)) the chain is Extracellular. Residue 48-58 (VIFDAGSTGSR) participates in ATP binding. The N-linked (GlcNAc...) asparagine glycan is linked to Asn151. Glu170 acts as the Proton acceptor in catalysis. Residue 194–204 (ATIDLGGGSVQ) coordinates ATP. A glycan (N-linked (GlcNAc...) asparagine) is linked at Asn262.

The protein belongs to the GDA1/CD39 NTPase family. Ca(2+) serves as cofactor. In terms of processing, the N-terminus is blocked.

The protein resides in the membrane. The enzyme catalyses a ribonucleoside 5'-triphosphate + 2 H2O = a ribonucleoside 5'-phosphate + 2 phosphate + 2 H(+). In terms of biological role, catalyzes the hydrolysis of phosphoanhydride bonds of nucleoside tri- and di-phosphates. The polypeptide is Apyrase (RROP1) (Solanum tuberosum (Potato)).